Reading from the N-terminus, the 466-residue chain is Replicative helicase loading/DNA remodeling protein DnaB (466 aa).

The segment at 3–113 (RQAFEFGLRP…ETQFVYQLIQ (111 aa)) is DDBH1. The tract at residues 200–292 (EMLRQMLGKH…TSSSAGKSSE (93 aa)) is DDBH2-1. The tract at residues 293–401 (VNPKPQSDEW…QPKNEGSSGN (109 aa)) is DDBH2-2.

The protein belongs to the DnaB/DnaD family. In terms of assembly, homotetramer, higher-order oligomers are induced by ssDNA. The DNA replisome assembles sequentially on oriC in this order; DnaA, DnaD, DnaB, DnaI-DnaC helicase. Part of the replication restart primosome, PriA binds first, then DnaD and subsequently DnaB bind.

In terms of biological role, helps DnaI load the DnaC replicative helicase onto single-stranded (ss)DNA. During DNA replication from the origin of replication (oriC) in the DNA replisome, DnaB and DnaD are required after DnaA and before subsequent helicase DnaC loading. Component of the replication restart primosome, which reloads the replicative helicase on sites other than oriC. Essential for replication initiation of the chromosome and plasmids. Remodels DNA, laterally compacts supercoiled plasmid and linear DNA. Binds supercoiled, nicked and linear double-stranded (ds)DNA and phage phiX174 single-stranded (ss)DNA; phiX174 ssDNA is a better substrate than for B.subtilis. No binding to phage M13 ssDNA although it induces oligomers. In Staphylococcus aureus (strain NCTC 8325 / PS 47), this protein is Replicative helicase loading/DNA remodeling protein DnaB.